A 373-amino-acid polypeptide reads, in one-letter code: Septin homolog spn3 (373 aa).

The 277-residue stretch at 10–286 (KGIPLNLMVV…ETYRTEKLST (277 aa)) folds into the Septin-type G domain. Positions 20-27 (GDVGLGRT) are G1 motif. A GTP-binding site is contributed by 20–27 (GDVGLGRT). The interval 79–82 (DTPH) is G3 motif. A G4 motif region spans residues 161 to 164 (AKAD). Residues 162-170 (KADSLTAQE) and Arg-235 each bind GTP. Residue Ser-303 is modified to Phosphoserine. A coiled-coil region spans residues 311–357 (EDRLRAIELSVQKEIEEKRRQLLAREEALRALEEKLAASTAAMANAS).

It belongs to the TRAFAC class TrmE-Era-EngA-EngB-Septin-like GTPase superfamily. Septin GTPase family. In terms of assembly, component of the septin complex composed of two copies of each spn1, spn2, spn3 and spn4.

It localises to the cytoplasm. Its subcellular location is the cell cortex. Functionally, plays a role in the cell cycle. Involved in a late stage of septum formation leading to the separation of the daughter cells. This chain is Septin homolog spn3 (spn3), found in Schizosaccharomyces pombe (strain 972 / ATCC 24843) (Fission yeast).